The following is a 158-amino-acid chain: Phosphopantetheine adenylyltransferase (158 aa).

Ser-8 contacts substrate. ATP-binding positions include 8 to 9 and His-16; that span reads SF. Substrate contacts are provided by Lys-40, Thr-72, and Arg-86. Residues 87–89, Glu-97, and 122–128 each bind ATP; these read GLR and HSFLSSS.

The protein belongs to the bacterial CoaD family. In terms of assembly, homohexamer. Mg(2+) is required as a cofactor.

The protein resides in the cytoplasm. It catalyses the reaction (R)-4'-phosphopantetheine + ATP + H(+) = 3'-dephospho-CoA + diphosphate. The protein operates within cofactor biosynthesis; coenzyme A biosynthesis; CoA from (R)-pantothenate: step 4/5. Functionally, reversibly transfers an adenylyl group from ATP to 4'-phosphopantetheine, yielding dephospho-CoA (dPCoA) and pyrophosphate. The chain is Phosphopantetheine adenylyltransferase from Prochlorococcus marinus (strain NATL1A).